Reading from the N-terminus, the 535-residue chain is 4-hydroxy-3-methylbut-2-enyl diphosphate reductase, apicoplast (535 aa).

Cysteine 231 is a [4Fe-4S] cluster binding site. The (2E)-4-hydroxy-3-methylbut-2-enyl diphosphate site is built by histidine 260 and histidine 293. Dimethylallyl diphosphate-binding residues include histidine 260 and histidine 293. Positions 260 and 293 each coordinate isopentenyl diphosphate. Cysteine 315 provides a ligand contact to [4Fe-4S] cluster. Histidine 343 contacts (2E)-4-hydroxy-3-methylbut-2-enyl diphosphate. Residue histidine 343 coordinates dimethylallyl diphosphate. Histidine 343 serves as a coordination point for isopentenyl diphosphate. The active-site Proton donor is glutamate 345. Threonine 383 lines the (2E)-4-hydroxy-3-methylbut-2-enyl diphosphate pocket. Cysteine 413 is a binding site for [4Fe-4S] cluster. (2E)-4-hydroxy-3-methylbut-2-enyl diphosphate-binding residues include serine 441, serine 442, asparagine 443, and serine 485. Dimethylallyl diphosphate-binding residues include serine 441, serine 442, asparagine 443, and serine 485. Isopentenyl diphosphate-binding residues include serine 441, serine 442, asparagine 443, and serine 485.

Belongs to the IspH family. As to quaternary structure, interacts with Fd/ferredoxin. [4Fe-4S] cluster serves as cofactor.

It is found in the plastid. Its subcellular location is the apicoplast. The catalysed reaction is dimethylallyl diphosphate + 2 oxidized [2Fe-2S]-[ferredoxin] + H2O = (2E)-4-hydroxy-3-methylbut-2-enyl diphosphate + 2 reduced [2Fe-2S]-[ferredoxin] + 2 H(+). The enzyme catalyses isopentenyl diphosphate + 2 oxidized [2Fe-2S]-[ferredoxin] + H2O = (2E)-4-hydroxy-3-methylbut-2-enyl diphosphate + 2 reduced [2Fe-2S]-[ferredoxin] + 2 H(+). Its pathway is isoprenoid biosynthesis; dimethylallyl diphosphate biosynthesis; dimethylallyl diphosphate from (2E)-4-hydroxy-3-methylbutenyl diphosphate: step 1/1. It participates in isoprenoid biosynthesis; isopentenyl diphosphate biosynthesis via DXP pathway; isopentenyl diphosphate from 1-deoxy-D-xylulose 5-phosphate: step 6/6. In terms of biological role, catalyzes the conversion of 1-hydroxy-2-methyl-2-(E)-butenyl 4-diphosphate (HMBPP) into a mixture of isopentenyl diphosphate (IPP) and dimethylallyl diphosphate (DMAPP). Acts in the terminal step of the DOXP/MEP pathway for isoprenoid precursor biosynthesis. The polypeptide is 4-hydroxy-3-methylbut-2-enyl diphosphate reductase, apicoplast (Plasmodium falciparum (isolate 3D7)).